Consider the following 162-residue polypeptide: NADH-quinone oxidoreductase subunit I (162 aa).

2 4Fe-4S ferredoxin-type domains span residues 52–82 (LRRY…IEAG) and 93–122 (TRYD…EGPN). 8 residues coordinate [4Fe-4S] cluster: Cys-62, Cys-65, Cys-68, Cys-72, Cys-102, Cys-105, Cys-108, and Cys-112.

It belongs to the complex I 23 kDa subunit family. In terms of assembly, NDH-1 is composed of 14 different subunits. Subunits NuoA, H, J, K, L, M, N constitute the membrane sector of the complex. [4Fe-4S] cluster is required as a cofactor.

It localises to the cell inner membrane. The enzyme catalyses a quinone + NADH + 5 H(+)(in) = a quinol + NAD(+) + 4 H(+)(out). NDH-1 shuttles electrons from NADH, via FMN and iron-sulfur (Fe-S) centers, to quinones in the respiratory chain. The immediate electron acceptor for the enzyme in this species is believed to be ubiquinone. Couples the redox reaction to proton translocation (for every two electrons transferred, four hydrogen ions are translocated across the cytoplasmic membrane), and thus conserves the redox energy in a proton gradient. This chain is NADH-quinone oxidoreductase subunit I, found in Methylobacterium sp. (strain 4-46).